The following is a 252-amino-acid chain: 2-succinyl-6-hydroxy-2,4-cyclohexadiene-1-carboxylate synthase (252 aa).

Belongs to the AB hydrolase superfamily. MenH family. As to quaternary structure, monomer.

The catalysed reaction is 5-enolpyruvoyl-6-hydroxy-2-succinyl-cyclohex-3-ene-1-carboxylate = (1R,6R)-6-hydroxy-2-succinyl-cyclohexa-2,4-diene-1-carboxylate + pyruvate. It functions in the pathway quinol/quinone metabolism; 1,4-dihydroxy-2-naphthoate biosynthesis; 1,4-dihydroxy-2-naphthoate from chorismate: step 3/7. Its pathway is quinol/quinone metabolism; menaquinone biosynthesis. Catalyzes a proton abstraction reaction that results in 2,5-elimination of pyruvate from 2-succinyl-5-enolpyruvyl-6-hydroxy-3-cyclohexene-1-carboxylate (SEPHCHC) and the formation of 2-succinyl-6-hydroxy-2,4-cyclohexadiene-1-carboxylate (SHCHC). The polypeptide is 2-succinyl-6-hydroxy-2,4-cyclohexadiene-1-carboxylate synthase (Escherichia coli (strain K12 / MC4100 / BW2952)).